Consider the following 94-residue polypeptide: Venom protein 59.1 (94 aa).

The signal sequence occupies residues 1-22; sequence MNSREMFCVFILFASFFYCSYA. 6 disulfide bridges follow: C19-C47, C26-C49, C32-C50, C38-C53, C61-C76, and C70-C91. One can recognise an IGFBP N-terminal domain in the interval 23–94; it reads EQECNCDKSC…GEALEICLRA (72 aa).

Expressed by the venom gland.

The protein resides in the secreted. The chain is Venom protein 59.1 from Lychas mucronatus (Chinese swimming scorpion).